The primary structure comprises 215 residues: 3,4-dihydroxy-2-butanone 4-phosphate synthase (215 aa).

D-ribulose 5-phosphate contacts are provided by residues 37–38 (RE), D42, 150–154 (RPGHT), and E174. E38 contributes to the Mg(2+) binding site. H153 serves as a coordination point for Mg(2+).

This sequence belongs to the DHBP synthase family. As to quaternary structure, homodimer. The cofactor is Mg(2+). Mn(2+) serves as cofactor.

It catalyses the reaction D-ribulose 5-phosphate = (2S)-2-hydroxy-3-oxobutyl phosphate + formate + H(+). Its pathway is cofactor biosynthesis; riboflavin biosynthesis; 2-hydroxy-3-oxobutyl phosphate from D-ribulose 5-phosphate: step 1/1. In terms of biological role, catalyzes the conversion of D-ribulose 5-phosphate to formate and 3,4-dihydroxy-2-butanone 4-phosphate. This is 3,4-dihydroxy-2-butanone 4-phosphate synthase from Buchnera aphidicola subsp. Acyrthosiphon pisum (strain 5A).